We begin with the raw amino-acid sequence, 215 residues long: Pyridoxine/pyridoxamine 5'-phosphate oxidase (215 aa).

Residues 9-12 and lysine 69 each bind substrate; that span reads RREY. Residues 64-69, 79-80, lysine 86, and glutamine 108 each bind FMN; these read RILLLK and FT. Substrate-binding residues include tyrosine 126, arginine 130, and serine 134. FMN contacts are provided by residues 143 to 144 and tryptophan 188; that span reads QS. Residue 194-196 participates in substrate binding; the sequence is RLH. Residue arginine 198 coordinates FMN.

This sequence belongs to the pyridoxamine 5'-phosphate oxidase family. Homodimer. It depends on FMN as a cofactor.

The catalysed reaction is pyridoxamine 5'-phosphate + O2 + H2O = pyridoxal 5'-phosphate + H2O2 + NH4(+). The enzyme catalyses pyridoxine 5'-phosphate + O2 = pyridoxal 5'-phosphate + H2O2. It participates in cofactor metabolism; pyridoxal 5'-phosphate salvage; pyridoxal 5'-phosphate from pyridoxamine 5'-phosphate: step 1/1. Its pathway is cofactor metabolism; pyridoxal 5'-phosphate salvage; pyridoxal 5'-phosphate from pyridoxine 5'-phosphate: step 1/1. Its function is as follows. Catalyzes the oxidation of either pyridoxine 5'-phosphate (PNP) or pyridoxamine 5'-phosphate (PMP) into pyridoxal 5'-phosphate (PLP). This is Pyridoxine/pyridoxamine 5'-phosphate oxidase from Pseudomonas paraeruginosa (strain DSM 24068 / PA7) (Pseudomonas aeruginosa (strain PA7)).